Here is a 342-residue protein sequence, read N- to C-terminus: Pyrophosphate--fructose 6-phosphate 1-phosphotransferase (342 aa).

Glycine 10 lines the diphosphate pocket. Glutamate 103 is a Mg(2+) binding site. Residues 126–128 (TID), arginine 163, 170–172 (MGR), glutamate 222, arginine 266, and 272–275 (HVQR) each bind substrate. Aspartate 128 acts as the Proton acceptor in catalysis.

This sequence belongs to the phosphofructokinase type A (PFKA) family. Mixed-substrate PFK group III subfamily. In terms of assembly, homodimer or homotetramer. The cofactor is Mg(2+).

The protein resides in the cytoplasm. It catalyses the reaction beta-D-fructose 6-phosphate + diphosphate = beta-D-fructose 1,6-bisphosphate + phosphate + H(+). The protein operates within carbohydrate degradation; glycolysis; D-glyceraldehyde 3-phosphate and glycerone phosphate from D-glucose: step 3/4. Non-allosteric. Catalyzes the phosphorylation of D-fructose 6-phosphate, the first committing step of glycolysis. Uses inorganic phosphate (PPi) as phosphoryl donor instead of ATP like common ATP-dependent phosphofructokinases (ATP-PFKs), which renders the reaction reversible, and can thus function both in glycolysis and gluconeogenesis. Consistently, PPi-PFK can replace the enzymes of both the forward (ATP-PFK) and reverse (fructose-bisphosphatase (FBPase)) reactions. This is Pyrophosphate--fructose 6-phosphate 1-phosphotransferase from Streptomyces coelicolor (strain ATCC BAA-471 / A3(2) / M145).